The following is a 666-amino-acid chain: Envelope glycoprotein (666 aa).

The signal sequence occupies residues 1-33; the sequence is MDRPALPKSIKDKTNPWGPIILGILIMLGGALG. The segment at 31 to 264 is receptor-binding domain (RBD); that stretch reads ALGKGSPHKV…KISDLGPRVP (234 aa). At 34–607 the chain is on the extracellular side; it reads KGSPHKVFNL…FNRSPWLTTL (574 aa). N-linked (GlcNAc...) asparagine; by host glycosylation occurs at N42. 5 disulfides stabilise this stretch: C76–C127, C102–C116, C103–C112, C150–C170, and C162–C175. Zn(2+) is bound at residue D115. N197 carries an N-linked (GlcNAc...) asparagine; by host glycan. A disulfide bridge links C207 with C213. The disordered stretch occupies residues 265–310; that stretch reads IGPNPVLSEQRPPSQPEPARLPPSSNLTQGGTPSAPTGPPQEGTGD. A compositionally biased stretch (polar residues) spans 287–299; the sequence is PSSNLTQGGTPSA. N-linked (GlcNAc...) asparagine; by host glycosylation is found at N290 and N324. 5 disulfides stabilise this stretch: C334–C337, C334–C560, C364–C417, C424–C437, and C552–C560. The CXXC motif lies at 334 to 337; sequence CWLC. Residues N356 and N363 are each glycosylated (N-linked (GlcNAc...) asparagine; by host). Residues 378–399 form a disordered region; sequence TGKPLPRKGSQDPPGPVQYHSG. The N-linked (GlcNAc...) asparagine; by host glycan is linked to N431. The fusion peptide stretch occupies residues 469–489; the sequence is VSLTLALLLGGLTMGGIAAGV. Residues 500–534 are a coiled coil; that stretch reads QQFEQLHAAIQADLKEVESSITNLEKSLTSLSEVV. The segment at 535–551 is immunosuppression; that stretch reads LQNRRGLDLLFLEKGGL. The CX6CC motif lies at 552–560; the sequence is CAALKEECC. Residues 608-628 form a helical membrane-spanning segment; that stretch reads ISTIMGPLIILLLILMFGPCI. The S-palmitoyl cysteine; by host moiety is linked to residue C627. At 629–666 the chain is on the cytoplasmic side; the sequence is LNRLVQFVKDRISVVQALVLTQQYHQLKPLEHGRAIVK. The YXXL motif; contains endocytosis signal motif lies at 652-655; it reads YHQL.

The mature envelope protein (Env) consists of a trimer of SU-TM heterodimers attached by a labile interchain disulfide bond. Post-translationally, specific enzymatic cleavages in vivo yield mature proteins. Envelope glycoproteins are synthesized as an inactive precursor that is N-glycosylated and processed likely by host cell furin or by a furin-like protease in the Golgi to yield the mature SU and TM proteins. The cleavage site between SU and TM requires the minimal sequence [KR]-X-[KR]-R. The R-peptide is released from the C-terminus of the cytoplasmic tail of the TM protein upon particle formation as a result of proteolytic cleavage by the viral protease. Cleavage of this peptide is required for TM to become fusogenic. In terms of processing, the CXXC motif is highly conserved across a broad range of retroviral envelope proteins. It is thought to participate in the formation of a labile disulfide bond possibly with the CX6CC motif present in the transmembrane protein. Isomerization of the intersubunit disulfide bond to an SU intrachain disulfide bond is thought to occur upon receptor recognition in order to allow membrane fusion. The transmembrane protein is palmitoylated. Post-translationally, the R-peptide is palmitoylated.

The protein localises to the virion membrane. It is found in the host cell membrane. The surface protein (SU) attaches the virus to the host cell by binding to its receptor. This interaction triggers the refolding of the transmembrane protein (TM) and is thought to activate its fusogenic potential by unmasking its fusion peptide. Fusion occurs at the host cell plasma membrane. Its function is as follows. The transmembrane protein (TM) acts as a class I viral fusion protein. Under the current model, the protein has at least 3 conformational states: pre-fusion native state, pre-hairpin intermediate state, and post-fusion hairpin state. During viral and target cell membrane fusion, the coiled coil regions (heptad repeats) assume a trimer-of-hairpins structure, positioning the fusion peptide in close proximity to the C-terminal region of the ectodomain. The formation of this structure appears to drive apposition and subsequent fusion of viral and target cell membranes. Membranes fusion leads to delivery of the nucleocapsid into the cytoplasm. The sequence is that of Envelope glycoprotein (env) from Hortulanus murine leukemia virus (HoMuLV).